The primary structure comprises 228 residues: uncharacterized protein (228 aa).

One can recognise an HTH gntR-type domain in the interval 11 to 78 (PPVNQQIYRI…PQRGSYVNKI (68 aa)). Residues 38-57 (EKEVSVRFNVSRQPVREAFI) constitute a DNA-binding region (H-T-H motif).

This is an uncharacterized protein from Escherichia coli O6:H1 (strain CFT073 / ATCC 700928 / UPEC).